The chain runs to 173 residues: MSWKALTILLVFSSTQATASCRWSRAALFPAAHRPKRSLSLPLNPVLQTSLEEVELLYELLLAEIEISPDLEISIKDEELASLRKALSFHSICNNIIPKRIPDIRRLSANLANHPGILKKEDFERITLTLAYTAYRTALSEGHQKDIWAQSLISLFQALRHDLMRSSSPAVSS.

The first 17 residues, 1-17 (MSWKALTILLVFSSTQA), serve as a signal peptide directing secretion.

Belongs to the FAM180 family.

Its subcellular location is the secreted. This chain is Protein FAM180A (Fam180a), found in Mus musculus (Mouse).